Reading from the N-terminus, the 316-residue chain is Ornithine carbamoyltransferase (316 aa).

Carbamoyl phosphate-binding positions include 57-60 (STRT), Gln-84, Arg-108, and 135-138 (HPCQ). L-ornithine contacts are provided by residues Asn-166, Asp-230, and 234-235 (SM). Residues 269–270 (CL) and Arg-297 contribute to the carbamoyl phosphate site.

This sequence belongs to the aspartate/ornithine carbamoyltransferase superfamily. OTCase family.

The protein localises to the cytoplasm. The enzyme catalyses carbamoyl phosphate + L-ornithine = L-citrulline + phosphate + H(+). It functions in the pathway amino-acid degradation; L-arginine degradation via ADI pathway; carbamoyl phosphate from L-arginine: step 2/2. In terms of biological role, reversibly catalyzes the transfer of the carbamoyl group from carbamoyl phosphate (CP) to the N(epsilon) atom of ornithine (ORN) to produce L-citrulline. This Bacillus anthracis (strain CDC 684 / NRRL 3495) protein is Ornithine carbamoyltransferase.